The sequence spans 295 residues: Diaminopimelate epimerase (295 aa).

Residues Asn11 and Asn67 each contribute to the substrate site. Cys76 functions as the Proton donor in the catalytic mechanism. Residues 77–78 (GN), Asn171, Asn210, and 228–229 (ER) contribute to the substrate site. Cys237 functions as the Proton acceptor in the catalytic mechanism. Residue 238-239 (GT) participates in substrate binding.

This sequence belongs to the diaminopimelate epimerase family. In terms of assembly, homodimer.

It localises to the cytoplasm. It carries out the reaction (2S,6S)-2,6-diaminopimelate = meso-2,6-diaminopimelate. The protein operates within amino-acid biosynthesis; L-lysine biosynthesis via DAP pathway; DL-2,6-diaminopimelate from LL-2,6-diaminopimelate: step 1/1. Its function is as follows. Catalyzes the stereoinversion of LL-2,6-diaminopimelate (L,L-DAP) to meso-diaminopimelate (meso-DAP), a precursor of L-lysine. This Methanocaldococcus jannaschii (strain ATCC 43067 / DSM 2661 / JAL-1 / JCM 10045 / NBRC 100440) (Methanococcus jannaschii) protein is Diaminopimelate epimerase.